The primary structure comprises 275 residues: MATQETDDSLISTDVQTDATERGDQPDETVVETKHLDVHYGDEQALDDVSIDIPENKVTALIGPSGCGKSTFLRCINRMNDQIDACRVDGKVVFKGKNVYDDDVDPVALRRKIGQVFQTPNPFPKSIRENVVYGLEVQGEPASDEDVERALRGAALWDEVNNQLDSSGLDLSGGQQQRLCIARAIAPDPEVILMDEPTSALDPVAASKIEDLIDELVEDYTVIIVTHNMQQAARISDKTAVFLTGGNLVEFDDTTNIFENPEDDRVEDYITGKFG.

Residues 1–26 form a disordered region; that stretch reads MATQETDDSLISTDVQTDATERGDQP. Residues 9 to 18 are compositionally biased toward polar residues; sequence SLISTDVQTD. Residues 31 to 270 form the ABC transporter domain; the sequence is VETKHLDVHY…PEDDRVEDYI (240 aa). 63 to 70 is an ATP binding site; the sequence is GPSGCGKS.

The protein belongs to the ABC transporter superfamily. Phosphate importer (TC 3.A.1.7) family. In terms of assembly, the complex is composed of two ATP-binding proteins (PstB), two transmembrane proteins (PstC and PstA) and a solute-binding protein (PstS).

Its subcellular location is the cell membrane. It catalyses the reaction phosphate(out) + ATP + H2O = ADP + 2 phosphate(in) + H(+). In terms of biological role, part of the ABC transporter complex PstSACB involved in phosphate import. Responsible for energy coupling to the transport system. In Natronomonas pharaonis (strain ATCC 35678 / DSM 2160 / CIP 103997 / JCM 8858 / NBRC 14720 / NCIMB 2260 / Gabara) (Halobacterium pharaonis), this protein is Phosphate import ATP-binding protein PstB 3.